The following is a 422-amino-acid chain: Vitamin D3 receptor (422 aa).

Residues 21–96 constitute a DNA-binding region (nuclear receptor); that stretch reads PRICGVCGDR…IGMMKEFILT (76 aa). Zn(2+)-binding residues include Cys24, Cys27, Cys41, Cys44, Cys60, Cys66, Cys76, and Cys79. 2 consecutive NR C4-type zinc fingers follow at residues 24–44 and 60–84; these read CGVCGDRATGFHFNAMTCEGC and CPFNGDCRITKDNRRHCQACRLKRC. The hinge stretch occupies residues 97–126; that stretch reads DEEVQRKREMIMKRKEEEALKDSLRPKLSE. An NR LBD domain is found at 127–418; it reads EQQHIIAILL…LTPLVLEVFG (292 aa). Tyr143 provides a ligand contact to calcitriol. The interval 161–185 is disordered; it reads VSTGSYSPRPTLSFSGDSSSNSDLY. Residues 162–172 show a composition bias toward polar residues; that stretch reads STGSYSPRPTL. Residues 173-182 show a composition bias toward low complexity; it reads SFSGDSSSNS. Ser232 provides a ligand contact to calcitriol. Residues 241 to 259 form an interaction with coactivator LXXLL motif region; sequence KMIPGFRDLTSDDQIVLLK. Positions 269, 273, 300, and 392 each coordinate calcitriol. A 9aaTAD motif is present at residues 411–419; it reads PLVLEVFGN.

It belongs to the nuclear hormone receptor family. NR1 subfamily. Homodimer in the absence of bound vitamin D3. Heterodimer with RXRA after vitamin D3 binding. Interacts with MED1, NCOA1, NCOA2, NCOA3 and NCOA6 coactivators, leading to a strong increase of transcription of target genes. Interacts with the corepressor NCOR1. Interacts with SNW1. Interacts with IRX4, the interaction does not affect its transactivation activity. Interacts with CRY1. Interacts with CRY2 in a ligand-dependent manner. Post-translationally, ubiquitinated by UBR5, leading to its degradation: UBR5 specifically recognizes and binds ligand-bound VDR when it is not associated with coactivators (NCOAs). In presence of NCOAs, the UBR5-degron is not accessible, preventing its ubiquitination and degradation.

The protein resides in the nucleus. Its subcellular location is the cytoplasm. Functionally, nuclear receptor for calcitriol, the active form of vitamin D3 which mediates the action of this vitamin on cells. Enters the nucleus upon vitamin D3 binding where it forms heterodimers with the retinoid X receptor/RXR. The VDR-RXR heterodimers bind to specific response elements on DNA and activate the transcription of vitamin D3-responsive target genes. Plays a central role in calcium homeostasis. Also functions as a receptor for the secondary bile acid lithocholic acid (LCA) and its metabolites. The chain is Vitamin D3 receptor (Vdr) from Mus musculus (Mouse).